Reading from the N-terminus, the 416-residue chain is Probable F-box protein At5g47300 (416 aa).

The 47-residue stretch at 40–86 (TLMLSDLPGDLLEEILCRVPATSLKQLRSTCKQWNNLFNNGRFTRKH) folds into the F-box domain.

The sequence is that of Probable F-box protein At5g47300 from Arabidopsis thaliana (Mouse-ear cress).